A 379-amino-acid chain; its full sequence is Inositol 3-kinase (379 aa).

Residues Ser-217, 267–270 (GAGD), and Asn-294 each bind ATP. Asp-270 functions as the Proton acceptor in the catalytic mechanism.

This sequence belongs to the carbohydrate kinase pfkB family.

It catalyses the reaction myo-inositol + ATP = 1D-myo-inositol 3-phosphate + ADP + H(+). Its function is as follows. Kinase that phosphorylates myo-inositol to produce multiple myo-inositol monophosphates, Ins(1)P, Ins(3)P, Ins(4)P, Ins(5)P and Ins(6)P. Participates in phytic acid biosynthesis in developing seeds. Phytic acid is the primary storage form of phosphorus in cereal grains and other plant seeds. This Zea mays (Maize) protein is Inositol 3-kinase.